A 278-amino-acid chain; its full sequence is Transcriptional regulator ICP22 homolog (278 aa).

Disordered stretches follow at residues 1-42 and 154-229; these read MFCT…RDTS and CDVS…KRPQ. An IE62-binding region spans residues 1–142; that stretch reads MFCTSPATRG…PRGEDGFIEA (142 aa). 2 stretches are compositionally biased toward acidic residues: residues 155 to 169 and 183 to 205; these read DVSD…DDDG and AESS…DSCE.

Belongs to the herpesviridae ICP22 family. As to quaternary structure, interacts with IE62; this interaction modulates the function of IE62. Interacts with several components of host pre-initiation complex including GTF2E1, GTF2H2 and POLR2A; these interactions lead to repression of gene transcription. Interacts with host ASF1A; altering its ability to bind histones. Post-translationally, phosphorylated in vitro by host and by protein kinase ORF47.

It localises to the host cytoplasm. The protein resides in the host nucleus. Its subcellular location is the virion tegument. In terms of biological role, immediate early (EI) protein that functions as a transcriptional regulator of cellular and viral mRNAs mainly by interacting with several general transcription factors thereby disorganizing the preinitiation complex at certain promoters. May additionally help to regulate levels of histones in virus-infected cells by interacting with host ASF1. By inhibiting host transcriptional program, IE63 plays a major role in the ability of VZV to overcome the innate immune response to the virus. In Varicella-zoster virus (strain Dumas) (HHV-3), this protein is Transcriptional regulator ICP22 homolog.